Reading from the N-terminus, the 131-residue chain is Small ribosomal subunit protein uS9 (131 aa).

The protein belongs to the universal ribosomal protein uS9 family.

The chain is Small ribosomal subunit protein uS9 from Mesoplasma florum (strain ATCC 33453 / NBRC 100688 / NCTC 11704 / L1) (Acholeplasma florum).